Here is a 118-residue protein sequence, read N- to C-terminus: Large ribosomal subunit protein bL20 (118 aa).

Belongs to the bacterial ribosomal protein bL20 family.

Binds directly to 23S ribosomal RNA and is necessary for the in vitro assembly process of the 50S ribosomal subunit. It is not involved in the protein synthesizing functions of that subunit. The chain is Large ribosomal subunit protein bL20 from Staphylococcus saprophyticus subsp. saprophyticus (strain ATCC 15305 / DSM 20229 / NCIMB 8711 / NCTC 7292 / S-41).